The chain runs to 310 residues: Ribosomal RNA large subunit methyltransferase F (310 aa).

It belongs to the methyltransferase superfamily. METTL16/RlmF family.

The protein resides in the cytoplasm. The enzyme catalyses adenosine(1618) in 23S rRNA + S-adenosyl-L-methionine = N(6)-methyladenosine(1618) in 23S rRNA + S-adenosyl-L-homocysteine + H(+). In terms of biological role, specifically methylates the adenine in position 1618 of 23S rRNA. This chain is Ribosomal RNA large subunit methyltransferase F, found in Psychromonas ingrahamii (strain DSM 17664 / CCUG 51855 / 37).